The chain runs to 719 residues: MSKVVYEGWMVRYGRRKIGRSYIHMRYFVLEPRLLAYYKKKPQDNQLPIKTMVIDGNCRVEDRGLKTHHGHMVYVLSIYNKKEKHHRITMAAFNIQEALMWKEKIECVIDQHQDSLVPSGQQYVSFEYKPGMDAGRTASSSDHESPFSALEDENDSQRDLLRRTTIGNGPPESILDWTKEFDAELSNQSSSNQAFSRKHWRLLQCQNGLRIFEELLEVDYLPRSCSRAMKAVGVVEATCEEIFELVMSMDGTRYEWDCSFHNGRLVEEVDGHTAILYHRLLLDWFPMVVWPRDLCYVRYWRRNDDGSYVVLFRSREHENCGPQPGFVRAHLESGGFNIAPLKPRNGRPRTQVQHLIQIDLKGWGSGYLPAFQQHCLLQMLNSVSGLREWFSQTDDRGQPIRIPVMVNMASSSLALGKGGKHHHKSSLSIDQTNGASRNSVLMDEDSDDDDEFQIPDSEPEPETSKQDQETDAKKTEEPALNIDLSCFSGNLRHDDNENARNCWRISDGNNFKVRGKSFCDDKRKIPAGKHLMDLVAVDWFKDTKRMDHVVRRKGCAAQVAAEKGLFSTVVNVQVPGSTHYSMVFYFVTKELVPGSLFQRFVDGDDEFRNSRLKLIPLVPKGSWIVRQSVGSTPCLLGKAVDCNYIRGPTYLEIDVDIGSSTVANGVLGLVIGVITSLVVEMAFLVQANTPEELPERLIGAVRVSHVELSSAIVPNLDSD.

The 108-residue stretch at 3 to 110 (KVVYEGWMVR…WKEKIECVID (108 aa)) folds into the PH domain. Positions 134-173 (AGRTASSSDHESPFSALEDENDSQRDLLRRTTIGNGPPES) are disordered. The region spanning 180–392 (EFDAELSNQS…VSGLREWFSQ (213 aa)) is the START domain. Residues 414 to 478 (ALGKGGKHHH…ETDAKKTEEP (65 aa)) are disordered. Residues 426 to 439 (SLSIDQTNGASRNS) are compositionally biased toward polar residues. The segment covering 442 to 461 (MDEDSDDDDEFQIPDSEPEP) has biased composition (acidic residues). A compositionally biased stretch (basic and acidic residues) spans 462–477 (ETSKQDQETDAKKTEE). Residues 665–685 (GVLGLVIGVITSLVVEMAFLV) form a helical membrane-spanning segment.

The protein localises to the endoplasmic reticulum membrane. It is found in the cell membrane. Its subcellular location is the endosome membrane. Functionally, binds to phosphatidylinositol-4-phosphate (PtdIns(4)P). May regulate the salicylic acid- (SA-) mediated resistance to pathogens. The sequence is that of Protein ENHANCED DISEASE RESISTANCE 2-like (EDR2L) from Arabidopsis thaliana (Mouse-ear cress).